The primary structure comprises 251 residues: MTVSINEVSKYFSKQTGTVQVLENINFQLEKGDFVTVIGPSGCGKSTLLKIVAGLDNDFEGEIIIDGERITKPSKKQGFIFQEHRLFPWLTVEENIAADLSLKDKYVKDKVKEWVEIVRLDGFEKSYPKEISGGMSQRVAIARALLRDPSVLLLDEPFGALDAFTRSHLQEVLLNIWEQKKTTMIFVTHDIDEAIYLSNRIVIMSAKPGEIHKVIENNLSYPRNKTSQSFQQLRTKVLQQFEHGGLIQTSI.

The 229-residue stretch at 3-231 (VSINEVSKYF…PRNKTSQSFQ (229 aa)) folds into the ABC transporter domain. Residue 39-46 (GPSGCGKS) participates in ATP binding.

It belongs to the ABC transporter superfamily. Aliphatic sulfonates importer (TC 3.A.1.17.2) family. As to quaternary structure, the complex is composed of two ATP-binding proteins (SsuB), two transmembrane proteins (SsuC) and a solute-binding protein (SsuA).

Its subcellular location is the cell membrane. The enzyme catalyses ATP + H2O + aliphatic sulfonate-[sulfonate-binding protein]Side 1 = ADP + phosphate + aliphatic sulfonateSide 2 + [sulfonate-binding protein]Side 1.. In terms of biological role, part of the ABC transporter complex SsuABC involved in aliphatic sulfonates import. Responsible for energy coupling to the transport system. In Bacillus thuringiensis subsp. konkukian (strain 97-27), this protein is Aliphatic sulfonates import ATP-binding protein SsuB.